The primary structure comprises 233 residues: tRNA (guanine-N(1)-)-methyltransferase (233 aa).

Residues G110 and 130 to 135 (IGDYVM) contribute to the S-adenosyl-L-methionine site.

The protein belongs to the RNA methyltransferase TrmD family. As to quaternary structure, homodimer.

Its subcellular location is the cytoplasm. The enzyme catalyses guanosine(37) in tRNA + S-adenosyl-L-methionine = N(1)-methylguanosine(37) in tRNA + S-adenosyl-L-homocysteine + H(+). Its function is as follows. Specifically methylates guanosine-37 in various tRNAs. This Finegoldia magna (strain ATCC 29328 / DSM 20472 / WAL 2508) (Peptostreptococcus magnus) protein is tRNA (guanine-N(1)-)-methyltransferase.